A 514-amino-acid polypeptide reads, in one-letter code: LWamide neuropeptides (514 aa).

An N-terminal signal peptide occupies residues 1–22 (MALKCHLVLLAITLLLAQCSGS). A compositionally biased stretch (basic and acidic residues) spans 23–53 (VDKKDSTTNHLDEKKTDSTEAHIVQETDALK). A propeptide spanning residues 23-75 (VDKKDSTTNHLDEKKTDSTEAHIVQETDALKENSYLGAEEESKEEDKKRSAAP) is cleaved from the precursor. Residues 23-180 (VDKKDSTTNH…PGLWGRSADA (158 aa)) are disordered. A tryptophan amide mark is found at Trp81 and Trp90. A propeptide spanning residues 93-97 (SADAG) is cleaved from the precursor. Tryptophan amide occurs at positions 102 and 111. Positions 114 to 118 (SADAG) are excised as a propeptide. 2 positions are modified to tryptophan amide: Trp123 and Trp132. The propeptide occupies 135-139 (SADAG). Tryptophan amide occurs at positions 144 and 153. Residues 156 to 160 (SADAG) constitute a propeptide that is removed on maturation. 2 positions are modified to tryptophan amide: Trp165 and Trp174. Residues 177–181 (SADAR) constitute a propeptide that is removed on maturation. Trp186 is modified (tryptophan amide). Positions 190–199 (EIYALWGGKR) are excised as a propeptide. Residue Trp205 is modified to Tryptophan amide. The propeptide occupies 208-212 (SADPG). A Tryptophan amide modification is found at Trp217. Positions 221 to 230 (ELVGLWGGKR) are excised as a propeptide. Trp236 is subject to Tryptophan amide. A propeptide spanning residues 239-243 (SAEAG) is cleaved from the precursor. Residues Trp248 and Trp257 each carry the tryptophan amide modification. Residues 258 to 475 (GRSADPLQPG…GRSAGSGQLG (218 aa)) form a disordered region. A propeptide spanning residues 260–264 (SADPL) is cleaved from the precursor. Tryptophan amide occurs at positions 269 and 278. Positions 281-284 (SADP) are excised as a propeptide. Tryptophan amide occurs at positions 290 and 299. Positions 302 to 305 (SADP) are excised as a propeptide. Residues Trp311 and Trp320 each carry the tryptophan amide modification. Residues 323 to 326 (SADP) constitute a propeptide that is removed on maturation. 2 positions are modified to tryptophan amide: Trp332 and Trp341. A propeptide spanning residues 344–347 (SADP) is cleaved from the precursor. Trp353 is modified (tryptophan amide). Residues 356-366 (SPGLWGRSADP) constitute a propeptide that is removed on maturation. Trp372 is modified (tryptophan amide). Positions 376-387 (QNPGFWGRSADP) are excised as a propeptide. Tryptophan amide is present on residues Trp393 and Trp402. A propeptide spanning residues 405–408 (SADP) is cleaved from the precursor. 2 positions are modified to tryptophan amide: Trp414 and Trp423. Positions 426-429 (SADP) are excised as a propeptide. Tryptophan amide is present on residues Trp435 and Trp444. A propeptide spanning residues 447–450 (SADP) is cleaved from the precursor. Trp456 and Trp465 each carry tryptophan amide. Residues 468-472 (SAGSG) constitute a propeptide that is removed on maturation. Tryptophan amide is present on residues Trp477 and Trp487. The disordered stretch occupies residues 489-514 (RSAEPPQFEDLEDLKKKSAIPQPKGQ). The propeptide occupies 490–514 (SAEPPQFEDLEDLKKKSAIPQPKGQ).

This sequence belongs to the LWamide neuropeptide family.

Its subcellular location is the secreted. Its function is as follows. Metamorphosin A may be part of an internal signaling system involved in control of metamorphosis. The chain is LWamide neuropeptides from Anthopleura elegantissima (Green aggregating anemone).